Here is an 89-residue protein sequence, read N- to C-terminus: Small ribosomal subunit protein uS15 (89 aa).

Belongs to the universal ribosomal protein uS15 family. Part of the 30S ribosomal subunit. Forms a bridge to the 50S subunit in the 70S ribosome, contacting the 23S rRNA.

In terms of biological role, one of the primary rRNA binding proteins, it binds directly to 16S rRNA where it helps nucleate assembly of the platform of the 30S subunit by binding and bridging several RNA helices of the 16S rRNA. Functionally, forms an intersubunit bridge (bridge B4) with the 23S rRNA of the 50S subunit in the ribosome. The chain is Small ribosomal subunit protein uS15 from Mycobacterium avium (strain 104).